The chain runs to 493 residues: Cytochrome P450 monooxygenase astA (493 aa).

A helical membrane pass occupies residues 5–25 (EIILLGLAALAVTYQVIVWIY). 2 N-linked (GlcNAc...) asparagine glycosylation sites follow: Asn-174 and Asn-286. Heme is bound at residue Cys-433.

It belongs to the cytochrome P450 family. It depends on heme as a cofactor.

Its subcellular location is the membrane. It carries out the reaction asperterpenoid A + reduced [NADPH--hemoprotein reductase] + O2 = asperterpenoid C + oxidized [NADPH--hemoprotein reductase] + H2O + H(+). Its pathway is secondary metabolite biosynthesis; terpenoid biosynthesis. Its function is as follows. Cytochrome P450 monooxygenase; part of the gene cluster that mediates the biosynthesis of the asperterpenoids, sesterterpenes that exhibit anti-tuberculosis activity. The first step of the pathway is performed by the sesterterpene synthase astC that possesses both prenyl transferase and terpene cyclase activity, converting isopentenyl diphosphate and dimethylallyl diphosphate into geranylfarnesyl diphosphate (GFPP) and further converting GFPP into preasperterpenoid A, respectively. The cytochrome P450 monooxygenase astB then dually oxidizes preasperterpenoid A to produce asperterpenoid A along with a minor product, asperterpenoid B. Finally, the cytochrome P450 monooxygenase astA converts asperterpenoid A into asperterpenoid C. This is Cytochrome P450 monooxygenase astA from Talaromyces wortmannii (Penicillium wortmannii).